A 272-amino-acid polypeptide reads, in one-letter code: Putative pyruvate, phosphate dikinase regulatory protein (272 aa).

Position 153–160 (153–160 (GVSRTSKT)) interacts with ADP.

Belongs to the pyruvate, phosphate/water dikinase regulatory protein family. PDRP subfamily.

The catalysed reaction is N(tele)-phospho-L-histidyl/L-threonyl-[pyruvate, phosphate dikinase] + ADP = N(tele)-phospho-L-histidyl/O-phospho-L-threonyl-[pyruvate, phosphate dikinase] + AMP + H(+). It carries out the reaction N(tele)-phospho-L-histidyl/O-phospho-L-threonyl-[pyruvate, phosphate dikinase] + phosphate + H(+) = N(tele)-phospho-L-histidyl/L-threonyl-[pyruvate, phosphate dikinase] + diphosphate. In terms of biological role, bifunctional serine/threonine kinase and phosphorylase involved in the regulation of the pyruvate, phosphate dikinase (PPDK) by catalyzing its phosphorylation/dephosphorylation. This chain is Putative pyruvate, phosphate dikinase regulatory protein, found in Streptococcus sanguinis (strain SK36).